Here is a 288-residue protein sequence, read N- to C-terminus: ATP synthase gamma chain (288 aa).

It belongs to the ATPase gamma chain family. As to quaternary structure, F-type ATPases have 2 components, CF(1) - the catalytic core - and CF(0) - the membrane proton channel. CF(1) has five subunits: alpha(3), beta(3), gamma(1), delta(1), epsilon(1). CF(0) has three main subunits: a, b and c.

The protein resides in the cell membrane. Produces ATP from ADP in the presence of a proton gradient across the membrane. The gamma chain is believed to be important in regulating ATPase activity and the flow of protons through the CF(0) complex. The polypeptide is ATP synthase gamma chain (Shouchella clausii (strain KSM-K16) (Alkalihalobacillus clausii)).